The chain runs to 323 residues: Protein MEI2-like 6 (323 aa).

The sequence is that of Protein MEI2-like 6 (ML6) from Oryza sativa subsp. japonica (Rice).